Here is an 89-residue protein sequence, read N- to C-terminus: Small ribosomal subunit protein uS15 (89 aa).

Belongs to the universal ribosomal protein uS15 family. In terms of assembly, part of the 30S ribosomal subunit. Forms a bridge to the 50S subunit in the 70S ribosome, contacting the 23S rRNA.

Functionally, one of the primary rRNA binding proteins, it binds directly to 16S rRNA where it helps nucleate assembly of the platform of the 30S subunit by binding and bridging several RNA helices of the 16S rRNA. In terms of biological role, forms an intersubunit bridge (bridge B4) with the 23S rRNA of the 50S subunit in the ribosome. The sequence is that of Small ribosomal subunit protein uS15 from Ectopseudomonas mendocina (strain ymp) (Pseudomonas mendocina).